We begin with the raw amino-acid sequence, 608 residues long: AAA ATPase forming ring-shaped complexes (608 aa).

A coiled-coil region spans residues 45–79 (AQEYDAVLRRLSAAEATRDNMSRQIRGAGEKNRKL). Residue 302 to 307 (GNGKTM) participates in ATP binding.

This sequence belongs to the AAA ATPase family. Homohexamer. Assembles into a hexameric ring structure.

This chain is AAA ATPase forming ring-shaped complexes, found in Rothia mucilaginosa (strain DY-18) (Stomatococcus mucilaginosus).